A 479-amino-acid chain; its full sequence is Adenosylhomocysteinase (479 aa).

Substrate contacts are provided by T65, D145, and E205. 206 to 208 is an NAD(+) binding site; sequence TTT. Substrate contacts are provided by K235 and D239. Residues N240, 269-274, E292, N327, 348-350, and N393 contribute to the NAD(+) site; these read GYGDVG and IGH.

The protein belongs to the adenosylhomocysteinase family. The cofactor is NAD(+).

Its subcellular location is the cytoplasm. The catalysed reaction is S-adenosyl-L-homocysteine + H2O = L-homocysteine + adenosine. It participates in amino-acid biosynthesis; L-homocysteine biosynthesis; L-homocysteine from S-adenosyl-L-homocysteine: step 1/1. May play a key role in the regulation of the intracellular concentration of adenosylhomocysteine. This is Adenosylhomocysteinase from Janthinobacterium sp. (strain Marseille) (Minibacterium massiliensis).